Here is a 269-residue protein sequence, read N- to C-terminus: Formamidopyrimidine-DNA glycosylase (269 aa).

The Schiff-base intermediate with DNA role is filled by Pro2. Glu3 serves as the catalytic Proton donor. The Proton donor; for beta-elimination activity role is filled by Lys57. DNA-binding residues include His90, Arg109, and Lys150. The segment at Gln235 to Lys269 adopts an FPG-type zinc-finger fold. Arg259 serves as the catalytic Proton donor; for delta-elimination activity.

It belongs to the FPG family. As to quaternary structure, monomer. Zn(2+) serves as cofactor.

The catalysed reaction is Hydrolysis of DNA containing ring-opened 7-methylguanine residues, releasing 2,6-diamino-4-hydroxy-5-(N-methyl)formamidopyrimidine.. It catalyses the reaction 2'-deoxyribonucleotide-(2'-deoxyribose 5'-phosphate)-2'-deoxyribonucleotide-DNA = a 3'-end 2'-deoxyribonucleotide-(2,3-dehydro-2,3-deoxyribose 5'-phosphate)-DNA + a 5'-end 5'-phospho-2'-deoxyribonucleoside-DNA + H(+). Involved in base excision repair of DNA damaged by oxidation or by mutagenic agents. Acts as a DNA glycosylase that recognizes and removes damaged bases. Has a preference for oxidized purines, such as 7,8-dihydro-8-oxoguanine (8-oxoG). Has AP (apurinic/apyrimidinic) lyase activity and introduces nicks in the DNA strand. Cleaves the DNA backbone by beta-delta elimination to generate a single-strand break at the site of the removed base with both 3'- and 5'-phosphates. In Salmonella agona (strain SL483), this protein is Formamidopyrimidine-DNA glycosylase.